A 212-amino-acid chain; its full sequence is Dihydrophenazinedicarboxylate synthase (212 aa).

Ser8 serves as a coordination point for substrate. FMN contacts are provided by residues 63 to 66 (RVIA) and 78 to 79 (CT). His80 is a substrate binding site. Residues 84–85 (RK) and Gln107 contribute to the FMN site. Substrate is bound by residues Arg129 and Ser137. Residues 142–143 (QS) and Arg195 each bind FMN.

It belongs to the pyridoxamine 5'-phosphate oxidase family. It depends on FMN as a cofactor.

It catalyses the reaction (1R,6R)-1,4,5,5a,6,9-hexahydrophenazine-1,6-dicarboxylate + O2 = (1R,10aS)-1,4,10,10a-tetrahydrophenazine-1,6-dicarboxylate + H2O2. It carries out the reaction (1R,10aS)-1,4,10,10a-tetrahydrophenazine-1,6-dicarboxylate + O2 = (5aS)-5,5a-dihydrophenazine-1,6-dicarboxylate + H2O2. The catalysed reaction is (1R,10aS)-1,4,10,10a-tetrahydrophenazine-1-carboxylate + O2 = (10aS)-10,10a-dihydrophenazine-1-carboxylate + H2O2. The enzyme catalyses (1R)-1,4,5,10-tetrahydrophenazine-1-carboxylate + O2 = (10aS)-10,10a-dihydrophenazine-1-carboxylate + H2O2. Its pathway is antibiotic biosynthesis; phenazine biosynthesis. Its function is as follows. Involved in the biosynthesis of the antibiotic phenazine, a nitrogen-containing heterocyclic molecule having important roles in virulence, competition and biological control. Catalyzes several oxidations in the terminal steps of core phenazine biosynthesis. It oxidizes both hexahydrophenazine-1,6-dicarboxylic acid (HHPDC) and tetrahydrophenazine-1-carboxylic acid (THPCA) and thereby contributes to the generation of both phenazine-1,6-dicarboxylic acid (PDC) and phenazine-1-carboxylic acid (PCA). It synthesizes phenazines in their reduced form, which are the likely end products in vivo. The protein is Dihydrophenazinedicarboxylate synthase of Burkholderia lata (strain ATCC 17760 / DSM 23089 / LMG 22485 / NCIMB 9086 / R18194 / 383).